The chain runs to 347 residues: Protein YIPF3 (347 aa).

The segment at 1 to 31 (MATPAAPASGVRNGAGPEWGGFEENIQGGGS) is disordered. Ala-2 is subject to N-acetylalanine; in Protein YIPF3, N-terminally processed. Over 2-145 (ATPAAPASGV…PIKMVNFPQK (144 aa)) the chain is Cytoplasmic. A helical membrane pass occupies residues 146–166 (VAGELYGPLMLVFTLVAILLH). Residues 167 to 184 (GMKTSDTIIREGTLMGTA) are Lumenal-facing. Residues 185 to 205 (IGTCFGYWLGVSSFIYFLAYL) traverse the membrane as a helical segment. The Cytoplasmic segment spans residues 206-211 (CNAQIT). A helical membrane pass occupies residues 212 to 234 (MLQMLALLGYGLFGHCIVLFITY). Residues 235 to 237 (NIH) lie on the Lumenal side of the membrane. A helical transmembrane segment spans residues 238–260 (LHALFYLFWLLVGGLSTLRMVAV). Residues 261 to 271 (LVSRTVGPTQR) lie on the Cytoplasmic side of the membrane. Residues 272-292 (LLLCGTLAALHMLFLLYLHFA) traverse the membrane as a helical segment. The Lumenal portion of the chain corresponds to 293 to 347 (YHKVVEGILDTLEGPNIPPMQRVPRDIPAVLPAARLPVAVINATAKAIAVTLQSH). The N-linked (GlcNAc...) asparagine glycan is linked to Asn-334.

It belongs to the YIP1 family. In terms of assembly, interacts with YIPF4 and YIPF5. Expressed by splenocytes (at protein level).

The protein resides in the cell membrane. Its subcellular location is the golgi apparatus. The protein localises to the cis-Golgi network membrane. It localises to the cytoplasm. Functionally, involved in the maintenance of the Golgi structure. May play a role in hematopoiesis. In Mus musculus (Mouse), this protein is Protein YIPF3 (Yipf3).